The sequence spans 874 residues: Alanine--tRNA ligase (874 aa).

The Zn(2+) site is built by histidine 563, histidine 567, cysteine 665, and histidine 669.

The protein belongs to the class-II aminoacyl-tRNA synthetase family. It depends on Zn(2+) as a cofactor.

It is found in the cytoplasm. The catalysed reaction is tRNA(Ala) + L-alanine + ATP = L-alanyl-tRNA(Ala) + AMP + diphosphate. Its function is as follows. Catalyzes the attachment of alanine to tRNA(Ala) in a two-step reaction: alanine is first activated by ATP to form Ala-AMP and then transferred to the acceptor end of tRNA(Ala). Also edits incorrectly charged Ser-tRNA(Ala) and Gly-tRNA(Ala) via its editing domain. This Histophilus somni (strain 129Pt) (Haemophilus somnus) protein is Alanine--tRNA ligase.